A 103-amino-acid chain; its full sequence is Conantokin R1-A (103 aa).

Positions 1 to 21 (MQLYTYLYLLVPLVTFHLILG) are cleaved as a signal peptide. Residues 22-79 (TGTLDHGGALTERRSTDATALKPEPVLQKSAARSTDDNGKDRLTQMKRILKKRGNNPR) constitute a propeptide that is removed on maturation. The segment at 34–83 (RRSTDATALKPEPVLQKSAARSTDDNGKDRLTQMKRILKKRGNNPRADEE) is disordered. Residues 55–65 (STDDNGKDRLT) are compositionally biased toward basic and acidic residues. Glu-82, Glu-83, and Glu-89 each carry 4-carboxyglutamate.

This sequence belongs to the conotoxin B superfamily. Ca(2+) is required as a cofactor. Mg(2+) serves as cofactor. In terms of tissue distribution, expressed by the venom duct.

It localises to the secreted. In terms of biological role, conantokins inhibit N-methyl-D-aspartate (NMDA) receptors. This toxin has the highest potency for the NR2B/GRIN2B subunit (IC(50)=0.11 uM), followed by NR2D/GRIN2D (IC(50)=0.48 uM), NR2A/GRIN2A (IC(50)=2.1 uM), and NR2C/GRIN2C (IC(50)=6.1 uM) subunits when tested on rat receptors. The polypeptide is Conantokin R1-A (Conus rolani (Cone snail)).